Consider the following 337-residue polypeptide: Ketol-acid reductoisomerase (NADP(+)) (337 aa).

Residues 1–180 (MFYEKDADVD…GGGKSGIIET (180 aa)) form the KARI N-terminal Rossmann domain. NADP(+) is bound by residues 22–25 (YGSQ), arginine 46, serine 49, serine 51, and 81–84 (DELQ). The active site involves histidine 106. Residue glycine 132 coordinates NADP(+). One can recognise a KARI C-terminal knotted domain in the interval 181-326 (TFKDECETDL…AELRAMMPWI (146 aa)). Mg(2+)-binding residues include aspartate 189, glutamate 193, glutamate 225, and glutamate 229. Residue serine 250 participates in substrate binding.

Belongs to the ketol-acid reductoisomerase family. It depends on Mg(2+) as a cofactor.

The enzyme catalyses (2R)-2,3-dihydroxy-3-methylbutanoate + NADP(+) = (2S)-2-acetolactate + NADPH + H(+). The catalysed reaction is (2R,3R)-2,3-dihydroxy-3-methylpentanoate + NADP(+) = (S)-2-ethyl-2-hydroxy-3-oxobutanoate + NADPH + H(+). Its pathway is amino-acid biosynthesis; L-isoleucine biosynthesis; L-isoleucine from 2-oxobutanoate: step 2/4. It functions in the pathway amino-acid biosynthesis; L-valine biosynthesis; L-valine from pyruvate: step 2/4. Its function is as follows. Involved in the biosynthesis of branched-chain amino acids (BCAA). Catalyzes an alkyl-migration followed by a ketol-acid reduction of (S)-2-acetolactate (S2AL) to yield (R)-2,3-dihydroxy-isovalerate. In the isomerase reaction, S2AL is rearranged via a Mg-dependent methyl migration to produce 3-hydroxy-3-methyl-2-ketobutyrate (HMKB). In the reductase reaction, this 2-ketoacid undergoes a metal-dependent reduction by NADPH to yield (R)-2,3-dihydroxy-isovalerate. The polypeptide is Ketol-acid reductoisomerase (NADP(+)) (Pelagibacter ubique (strain HTCC1062)).